Reading from the N-terminus, the 171-residue chain is Small ribosomal subunit protein mS25 (171 aa).

This sequence belongs to the mitochondrion-specific ribosomal protein mS25 family. Component of the mitochondrial ribosome small subunit (28S) which comprises a 12S rRNA and about 30 distinct proteins.

The protein resides in the mitochondrion. The sequence is that of Small ribosomal subunit protein mS25 (Mrps25) from Rattus norvegicus (Rat).